Consider the following 205-residue polypeptide: UPF0548 protein At2g17695 (205 aa).

The protein belongs to the UPF0548 family.

This chain is UPF0548 protein At2g17695, found in Arabidopsis thaliana (Mouse-ear cress).